The chain runs to 470 residues: Glutamate--tRNA ligase 2 (470 aa).

A 'HIGH' region motif is present at residues P11–G21. Residues K238 to R242 carry the 'KMSKS' region motif. ATP is bound at residue K241.

Belongs to the class-I aminoacyl-tRNA synthetase family. Glutamate--tRNA ligase type 1 subfamily. Monomer.

It localises to the cytoplasm. The catalysed reaction is tRNA(Glu) + L-glutamate + ATP = L-glutamyl-tRNA(Glu) + AMP + diphosphate. Functionally, catalyzes the attachment of glutamate to tRNA(Glu) in a two-step reaction: glutamate is first activated by ATP to form Glu-AMP and then transferred to the acceptor end of tRNA(Glu). The polypeptide is Glutamate--tRNA ligase 2 (Ehrlichia ruminantium (strain Welgevonden)).